A 327-amino-acid chain; its full sequence is Malate dehydrogenase (327 aa).

11–17 (GAAGQIS) is an NAD(+) binding site. 2 residues coordinate substrate: Arg92 and Arg98. Residues Asn105, Gln112, and 129 to 131 (VGN) contribute to the NAD(+) site. Substrate is bound by residues Asn131 and Arg162. The active-site Proton acceptor is His187.

Belongs to the LDH/MDH superfamily. MDH type 2 family.

The enzyme catalyses (S)-malate + NAD(+) = oxaloacetate + NADH + H(+). Functionally, catalyzes the reversible oxidation of malate to oxaloacetate. This Nitrosomonas europaea (strain ATCC 19718 / CIP 103999 / KCTC 2705 / NBRC 14298) protein is Malate dehydrogenase.